We begin with the raw amino-acid sequence, 216 residues long: Elongation factor Ts (216 aa).

The tract at residues 81 to 84 is involved in Mg(2+) ion dislocation from EF-Tu; sequence TDFV.

This sequence belongs to the EF-Ts family.

It localises to the cytoplasm. In terms of biological role, associates with the EF-Tu.GDP complex and induces the exchange of GDP to GTP. It remains bound to the aminoacyl-tRNA.EF-Tu.GTP complex up to the GTP hydrolysis stage on the ribosome. This chain is Elongation factor Ts, found in Geobacter sp. (strain M21).